Consider the following 73-residue polypeptide: MNTATGFIVLLVLATVLGCIEAGESHVREDAMGRARRGACTPTGQPCPYNESCCSGSCQEQLNENGHTVKRCV.

The first 22 residues, 1–22 (MNTATGFIVLLVLATVLGCIEA), serve as a signal peptide directing secretion. A propeptide spanning residues 23–37 (GESHVREDAMGRARR) is cleaved from the precursor. Cystine bridges form between Cys-40/Cys-54, Cys-47/Cys-58, and Cys-53/Cys-72.

It belongs to the neurotoxin 08 (Shiva) family. 01 (omega toxin) subfamily. As to expression, expressed by the venom gland.

The protein localises to the secreted. Insecticidal toxin that reversibly and voltage-independently blocks both mid-low- (M-LVA) and high-voltage-activated (HVA) calcium channels (Cav) in cockroach DUM neurons. Also causes a modest block of insect sodium channel currents (Nav). Induces potent excitatory symptoms, followed by flaccid paralysis leading to death in house crickets. The polypeptide is Omega-hexatoxin-Ar1b (Atrax robustus (Sydney funnel-web spider)).